The primary structure comprises 139 residues: Protein spalt-accessory (139 aa).

An N-terminal signal peptide occupies residues 1–16 (MKLLIALLALVTAAIA). Residues 60 to 75 (GIGQGGVHPGQGGFAG) show a composition bias toward gly residues. Residues 60–139 (GIGQGGVHPG…HHEHHGHHRH (80 aa)) are disordered. Basic and acidic residues predominate over residues 109 to 121 (NPHEYPEHHGEHH). Residues 122 to 139 (REHHEHHGHHEHHGHHRH) are compositionally biased toward basic residues.

Its subcellular location is the secreted. Functionally, likely to be involved in the establishment of the head. This chain is Protein spalt-accessory (sala), found in Drosophila simulans (Fruit fly).